We begin with the raw amino-acid sequence, 234 residues long: Sugar fermentation stimulation protein homolog (234 aa).

This sequence belongs to the SfsA family.

In Shewanella sp. (strain MR-4), this protein is Sugar fermentation stimulation protein homolog.